We begin with the raw amino-acid sequence, 181 residues long: tRNA-splicing endonuclease (181 aa).

Catalysis depends on residues tyrosine 118, histidine 126, and lysine 157.

Belongs to the tRNA-intron endonuclease family. Archaeal short subfamily. As to quaternary structure, homotetramer; although the tetramer contains four active sites, only two participate in the cleavage. Therefore, it should be considered as a dimer of dimers.

It carries out the reaction pretRNA = a 3'-half-tRNA molecule with a 5'-OH end + a 5'-half-tRNA molecule with a 2',3'-cyclic phosphate end + an intron with a 2',3'-cyclic phosphate and a 5'-hydroxyl terminus.. Functionally, endonuclease that removes tRNA introns. Cleaves pre-tRNA at the 5'- and 3'-splice sites to release the intron. The products are an intron and two tRNA half-molecules bearing 2',3' cyclic phosphate and 5'-OH termini. Recognizes a pseudosymmetric substrate in which 2 bulged loops of 3 bases are separated by a stem of 4 bp. The chain is tRNA-splicing endonuclease from Sulfolobus acidocaldarius (strain ATCC 33909 / DSM 639 / JCM 8929 / NBRC 15157 / NCIMB 11770).